A 285-amino-acid chain; its full sequence is Bifunctional protein FolD (285 aa).

Residues 166–168 (GAS) and Ile232 contribute to the NADP(+) site.

This sequence belongs to the tetrahydrofolate dehydrogenase/cyclohydrolase family. As to quaternary structure, homodimer.

The catalysed reaction is (6R)-5,10-methylene-5,6,7,8-tetrahydrofolate + NADP(+) = (6R)-5,10-methenyltetrahydrofolate + NADPH. The enzyme catalyses (6R)-5,10-methenyltetrahydrofolate + H2O = (6R)-10-formyltetrahydrofolate + H(+). It participates in one-carbon metabolism; tetrahydrofolate interconversion. In terms of biological role, catalyzes the oxidation of 5,10-methylenetetrahydrofolate to 5,10-methenyltetrahydrofolate and then the hydrolysis of 5,10-methenyltetrahydrofolate to 10-formyltetrahydrofolate. In Baumannia cicadellinicola subsp. Homalodisca coagulata, this protein is Bifunctional protein FolD.